The chain runs to 105 residues: Large ribosomal subunit protein uL24 (105 aa).

This sequence belongs to the universal ribosomal protein uL24 family. As to quaternary structure, part of the 50S ribosomal subunit.

In terms of biological role, one of two assembly initiator proteins, it binds directly to the 5'-end of the 23S rRNA, where it nucleates assembly of the 50S subunit. Its function is as follows. One of the proteins that surrounds the polypeptide exit tunnel on the outside of the subunit. The sequence is that of Large ribosomal subunit protein uL24 from Psychrobacter cryohalolentis (strain ATCC BAA-1226 / DSM 17306 / VKM B-2378 / K5).